The following is a 431-amino-acid chain: Glucose-1-phosphate adenylyltransferase (431 aa).

Lys-39 lines the beta-D-fructose 1,6-bisphosphate pocket. Residues Arg-40, His-46, and Arg-52 each contribute to the AMP site. Residue Tyr-114 participates in alpha-D-glucose 1-phosphate binding. Arg-130 serves as a coordination point for AMP. Residues Gly-179, 194–195 (EK), and Ser-212 contribute to the alpha-D-glucose 1-phosphate site. AMP is bound by residues Glu-370 and Arg-386. Beta-D-fructose 1,6-bisphosphate is bound by residues 419–423 (REMLR) and 429–431 (QER).

The protein belongs to the bacterial/plant glucose-1-phosphate adenylyltransferase family. Homotetramer.

It catalyses the reaction alpha-D-glucose 1-phosphate + ATP + H(+) = ADP-alpha-D-glucose + diphosphate. It participates in glycan biosynthesis; glycogen biosynthesis. Its activity is regulated as follows. Allosterically activated by fructose-1,6-bisphosphate (F16BP) and inhibited by AMP. Functionally, involved in the biosynthesis of ADP-glucose, a building block required for the elongation reactions to produce glycogen. Catalyzes the reaction between ATP and alpha-D-glucose 1-phosphate (G1P) to produce pyrophosphate and ADP-Glc. The protein is Glucose-1-phosphate adenylyltransferase of Escherichia coli O7:K1 (strain IAI39 / ExPEC).